Reading from the N-terminus, the 485-residue chain is Terminase, large subunit (485 aa).

ADP is bound by residues 17 to 22, 40 to 45, and arginine 79; these read KPHHVQ and QSGKSE. An ATPase activity region spans residues 22-197; that stretch reads QLAIHRSTAK…EFFLMGWRGG (176 aa). 2 residues coordinate ATP: glutamine 97 and glutamine 99. A Walker A motif motif is present at residues 125–131; the sequence is SEFRGKS. The short motif at 145 to 150 is the Walker B motif element; the sequence is FVILDE. Glutamate 150 serves as the catalytic For ATPase activity. Residues 256–438 are nuclease; the sequence is SNSVFSGLDM…DIVMSLALAY (183 aa). Mg(2+) contacts are provided by aspartate 294, aspartate 347, and aspartate 429.

It belongs to the Tequatrovirus large terminase family. Interacts with the terminase small subunit; the active complex is composed of a pentamer of terminase large subunits and a dodecamer of terminase small subunits. Interacts with the portal protein. Requires Mg(2+) as cofactor.

Functionally, the terminase large subunit acts as an ATP driven molecular motor necessary for viral DNA translocation into empty capsids and as an endonuclease that cuts the viral genome to initiate and to end a packaging reaction The terminase lies at a unique vertex of the procapsid and is composed of two subunits, a small terminase subunit involved in viral DNA recognition (packaging sequence), and a large terminase subunit possessing endonucleolytic and ATPase activities. Both terminase subunits heterooligomerize and are docked on the portal protein to form the packaging machine. The terminase large subunit exhibits endonuclease activity and cleaves the viral genome concatemer. Once the capsid is packaged with the DNA, the terminase complex is substituted by the tail. The protein is Terminase, large subunit of Thermus thermophilus (Thermus thermophilus phage P23-45).